A 284-amino-acid polypeptide reads, in one-letter code: Phosphoribosylaminoimidazole-succinocarboxamide synthase (284 aa).

It belongs to the SAICAR synthetase family.

It carries out the reaction 5-amino-1-(5-phospho-D-ribosyl)imidazole-4-carboxylate + L-aspartate + ATP = (2S)-2-[5-amino-1-(5-phospho-beta-D-ribosyl)imidazole-4-carboxamido]succinate + ADP + phosphate + 2 H(+). The protein operates within purine metabolism; IMP biosynthesis via de novo pathway; 5-amino-1-(5-phospho-D-ribosyl)imidazole-4-carboxamide from 5-amino-1-(5-phospho-D-ribosyl)imidazole-4-carboxylate: step 1/2. This chain is Phosphoribosylaminoimidazole-succinocarboxamide synthase, found in Chromobacterium violaceum (strain ATCC 12472 / DSM 30191 / JCM 1249 / CCUG 213 / NBRC 12614 / NCIMB 9131 / NCTC 9757 / MK).